The chain runs to 158 residues: Vasotocin-neurophysin VT 2 (158 aa).

Positions 1–19 are cleaved as a signal peptide; it reads MPHSTLLLCVIGLLAFSSA. Residues Cys-20 and Cys-25 are joined by a disulfide bond. Glycine amide is present on Gly-28. Disulfide bonds link Cys-41/Cys-85, Cys-44/Cys-58, Cys-52/Cys-75, Cys-59/Cys-65, Cys-92/Cys-105, Cys-99/Cys-117, and Cys-106/Cys-111.

This sequence belongs to the vasopressin/oxytocin family. Seven disulfide bonds are present in neurophysin.

The protein resides in the secreted. In terms of biological role, vasotocin is an antidiuretic hormone. The chain is Vasotocin-neurophysin VT 2 from Oncorhynchus keta (Chum salmon).